A 312-amino-acid polypeptide reads, in one-letter code: UDP-N-acetylenolpyruvoylglucosamine reductase (312 aa).

Residues 30-202 (RVGGPAQWLA…VAAQFQLEPG (173 aa)) enclose the FAD-binding PCMH-type domain. Arginine 181 is a catalytic residue. Serine 232 acts as the Proton donor in catalysis. Glutamate 302 is a catalytic residue.

The protein belongs to the MurB family. It depends on FAD as a cofactor.

It is found in the cytoplasm. It carries out the reaction UDP-N-acetyl-alpha-D-muramate + NADP(+) = UDP-N-acetyl-3-O-(1-carboxyvinyl)-alpha-D-glucosamine + NADPH + H(+). It participates in cell wall biogenesis; peptidoglycan biosynthesis. In terms of biological role, cell wall formation. The chain is UDP-N-acetylenolpyruvoylglucosamine reductase from Synechococcus sp. (strain CC9311).